The chain runs to 283 residues: Pyridoxine/pyridoxal/pyridoxamine kinase (283 aa).

Positions 23 and 59 each coordinate substrate. Aspartate 125 contacts ATP. Tyrosine 136 contacts Mg(2+). ATP is bound by residues threonine 157, glutamate 162, threonine 195, 222–225 (HAHV), and threonine 232. Mg(2+) is bound at residue glutamate 162. Aspartate 234 provides a ligand contact to substrate.

It belongs to the pyridoxine kinase family. PdxK subfamily. Homodimer. Mg(2+) serves as cofactor.

The catalysed reaction is pyridoxal + ATP = pyridoxal 5'-phosphate + ADP + H(+). The enzyme catalyses pyridoxine + ATP = pyridoxine 5'-phosphate + ADP + H(+). It catalyses the reaction pyridoxamine + ATP = pyridoxamine 5'-phosphate + ADP + H(+). It functions in the pathway cofactor metabolism; pyridoxal 5'-phosphate salvage; pyridoxal 5'-phosphate from pyridoxal: step 1/1. The protein operates within cofactor metabolism; pyridoxal 5'-phosphate salvage; pyridoxine 5'-phosphate from pyridoxine: step 1/1. Its pathway is cofactor metabolism; pyridoxal 5'-phosphate salvage; pyridoxamine 5'-phosphate from pyridoxamine: step 1/1. Its function is as follows. B6-vitamer kinase involved in the salvage pathway of pyridoxal 5'-phosphate (PLP). Catalyzes the phosphorylation of pyridoxine (PN), pyridoxal (PL), and pyridoxamine (PM), forming their respective 5'-phosphorylated esters, i.e. PNP, PLP and PMP. The polypeptide is Pyridoxine/pyridoxal/pyridoxamine kinase (Bordetella pertussis (strain Tohama I / ATCC BAA-589 / NCTC 13251)).